The chain runs to 633 residues: Copine-7 (633 aa).

2 consecutive C2 domains span residues 2-133 (SAGS…MRVS) and 212-339 (NAGK…AQWD). Residues Asp-245, Asp-251, Asp-307, Asp-309, and Asp-315 each coordinate Ca(2+). Residues 382–581 (HFTVAIDFTA…PALRDIVQFV (200 aa)) form the VWFA domain.

Belongs to the copine family. It depends on Ca(2+) as a cofactor. Expressed in the brain, testis, thymus and small intestine.

Its subcellular location is the cytoplasm. It localises to the nucleus. It is found in the cell membrane. Functionally, calcium-dependent phospholipid-binding protein that may play a role in calcium-mediated intracellular processes. The polypeptide is Copine-7 (Homo sapiens (Human)).